The primary structure comprises 85 residues: MVVNIEVFTSPTCPYCPMAIEVVDEAKKEFGDKIDVEKIDIMVDREKAIEYGLMAVPAIAINGVVRFVGAPSREELFEAINDEME.

Residues 2-85 (VVNIEVFTSP…LFEAINDEME (84 aa)) enclose the Glutaredoxin domain. Cysteine 13 and cysteine 16 form a disulfide bridge.

Belongs to the glutaredoxin family.

The protein resides in the cytoplasm. Its function is as follows. Acts to maintain redox homeostasis; functions as a protein disulfide reductase. The sequence is that of Probable Thioredoxin from Methanothermobacter thermautotrophicus (strain ATCC 29096 / DSM 1053 / JCM 10044 / NBRC 100330 / Delta H) (Methanobacterium thermoautotrophicum).